The primary structure comprises 147 residues: Cyanate hydratase (147 aa).

Catalysis depends on residues Arg-88, Glu-91, and Ser-114.

The protein belongs to the cyanase family.

The enzyme catalyses cyanate + hydrogencarbonate + 3 H(+) = NH4(+) + 2 CO2. Functionally, catalyzes the reaction of cyanate with bicarbonate to produce ammonia and carbon dioxide. This Methylibium petroleiphilum (strain ATCC BAA-1232 / LMG 22953 / PM1) protein is Cyanate hydratase.